Consider the following 88-residue polypeptide: Apolipoprotein C-I (88 aa).

Residues methionine 1–alanine 26 form the signal peptide.

Belongs to the apolipoprotein C1 family.

It localises to the secreted. Its function is as follows. Inhibitor of lipoprotein binding to the low density lipoprotein (LDL) receptor, LDL receptor-related protein, and very low density lipoprotein (VLDL) receptor. Associates with high density lipoproteins (HDL) and the triacylglycerol-rich lipoproteins in the plasma and makes up about 10% of the protein of the VLDL and 2% of that of HDL. Appears to interfere directly with fatty acid uptake and is also the major plasma inhibitor of cholesteryl ester transfer protein (CETP). Binds free fatty acids and reduces their intracellular esterification. Modulates the interaction of APOE with beta-migrating VLDL and inhibits binding of beta-VLDL to the LDL receptor-related protein. In Eidolon helvum (Straw-colored fruit bat), this protein is Apolipoprotein C-I (APOC1).